The following is a 157-amino-acid chain: 2-C-methyl-D-erythritol 2,4-cyclodiphosphate synthase (157 aa).

A divalent metal cation contacts are provided by D8 and H10. 4-CDP-2-C-methyl-D-erythritol 2-phosphate contacts are provided by residues 8–10 and 34–35; these read DVH and HS. H42 contributes to the a divalent metal cation binding site. 4-CDP-2-C-methyl-D-erythritol 2-phosphate contacts are provided by residues 56 to 58, 61 to 65, 100 to 106, 132 to 135, F139, and R142; these read DIG, FPDTD, AQAPKMA, and TTTE.

Belongs to the IspF family. As to quaternary structure, homotrimer. A divalent metal cation serves as cofactor.

The enzyme catalyses 4-CDP-2-C-methyl-D-erythritol 2-phosphate = 2-C-methyl-D-erythritol 2,4-cyclic diphosphate + CMP. It participates in isoprenoid biosynthesis; isopentenyl diphosphate biosynthesis via DXP pathway; isopentenyl diphosphate from 1-deoxy-D-xylulose 5-phosphate: step 4/6. In terms of biological role, involved in the biosynthesis of isopentenyl diphosphate (IPP) and dimethylallyl diphosphate (DMAPP), two major building blocks of isoprenoid compounds. Catalyzes the conversion of 4-diphosphocytidyl-2-C-methyl-D-erythritol 2-phosphate (CDP-ME2P) to 2-C-methyl-D-erythritol 2,4-cyclodiphosphate (ME-CPP) with a corresponding release of cytidine 5-monophosphate (CMP). The chain is 2-C-methyl-D-erythritol 2,4-cyclodiphosphate synthase from Pseudomonas fluorescens (strain ATCC BAA-477 / NRRL B-23932 / Pf-5).